A 188-amino-acid chain; its full sequence is uncharacterized protein (188 aa).

The interval 121–142 is disordered; that stretch reads ADTLSRKNKRSSDQKRNGQHFE. Basic and acidic residues predominate over residues 130-142; sequence RSSDQKRNGQHFE.

It belongs to the chlamydial CPn_0422/CT_273/TC_0545 family.

This is an uncharacterized protein from Chlamydia trachomatis serovar D (strain ATCC VR-885 / DSM 19411 / UW-3/Cx).